A 232-amino-acid polypeptide reads, in one-letter code: Glutathione S-transferase E14 (232 aa).

A GST N-terminal domain is found at 4–85 (PKPILYYDER…HLAEKFDEGG (82 aa)). The 128-residue stretch at 91–218 (EHAERMKVLN…RQTMESVGSF (128 aa)) folds into the GST C-terminal domain.

It belongs to the GST superfamily. Epsilon family. As to expression, expressed in the adult ovary (at protein level).

The catalysed reaction is RX + glutathione = an S-substituted glutathione + a halide anion + H(+). Its function is as follows. Conjugation of reduced glutathione to a wide number of exogenous and endogenous hydrophobic electrophiles. Essential for ecdysteroid biosynthesis. May be involved in detoxification. This is Glutathione S-transferase E14 from Drosophila melanogaster (Fruit fly).